The primary structure comprises 226 residues: EEF1A lysine methyltransferase 3 (226 aa).

S-adenosyl-L-methionine contacts are provided by residues W57, 83–85 (GAG), D104, W133, and A150.

The protein belongs to the methyltransferase superfamily. METTL21 family. In terms of assembly, interacts with members of the heat shock protein 70 and 90 families and of the TCP-1 chaperonin family, as well as with HSPD1, STIP1 and tubulin; at least some of these proteins may be methylation substrates.

The protein resides in the cytoplasm. The protein localises to the cytoskeleton. It localises to the microtubule organizing center. It is found in the centrosome. The enzyme catalyses L-lysyl-[protein] + 3 S-adenosyl-L-methionine = N(6),N(6),N(6)-trimethyl-L-lysyl-[protein] + 3 S-adenosyl-L-homocysteine + 3 H(+). The catalysed reaction is L-lysyl-[protein] + S-adenosyl-L-methionine = N(6)-methyl-L-lysyl-[protein] + S-adenosyl-L-homocysteine + H(+). It carries out the reaction N(6)-methyl-L-lysyl-[protein] + S-adenosyl-L-methionine = N(6),N(6)-dimethyl-L-lysyl-[protein] + S-adenosyl-L-homocysteine + H(+). It catalyses the reaction N(6),N(6)-dimethyl-L-lysyl-[protein] + S-adenosyl-L-methionine = N(6),N(6),N(6)-trimethyl-L-lysyl-[protein] + S-adenosyl-L-homocysteine + H(+). Its function is as follows. Protein-lysine methyltransferase that selectively mono-, di- and trimethylates 'Lys-165' of the translation elongation factors EEF1A1 and EEF1A2 in an aminoacyl-tRNA and GTP-dependent manner. EEF1A1 methylation by EEF1AKMT3 is dynamic as well as inducible by stress conditions, such as ER-stress, and plays a regulatory role on mRNA translation. This chain is EEF1A lysine methyltransferase 3, found in Homo sapiens (Human).